A 495-amino-acid chain; its full sequence is Regulator of G-protein signaling 7 (495 aa).

Residues Glu37–Thr112 enclose the DEP domain. Phosphoserine occurs at positions 229 and 241. The segment at Asn235 to Asp256 is disordered. At Thr243 the chain carries Phosphothreonine. The 62-residue stretch at Glu255 to Leu316 folds into the G protein gamma domain. The RGS domain occupies Gly333–Leu448. Residue Ser434 is modified to Phosphoserine.

In terms of assembly, interacts with GNB5, forming the RGS7-GNB5 complex. Interacts with GPR158; promotes the GTPase activator activity of the RGS7-GNB5 complex in absence of glycine, in contrast GTPase activator activity of the RGS7-GNB5 complex is inhibited in presence of glycine. Interacts with GPR179. Interacts with PKD1; this prevents rapid proteasomal degradation. Interacts with RGS7BP, leading to regulate the subcellular location of the heterodimer formed with GNB5. Interacts (phosphorylated form) with 14-3-3 protein YWHAQ. Interacts with SNAPIN. Interacts with GNAI1. Interacts with GNAO1, GNAI3 and GNAZ. In terms of processing, palmitoylated. Post-translationally, ubiquitinated, leading to rapid proteasomal degradation. Phosphorylation and subsequent interaction with 14-3-3 proteins inhibits GAP activity.

The protein localises to the cytoplasm. It is found in the cytosol. Its subcellular location is the cell membrane. It localises to the membrane. Functionally, GTPase activator component of the RGS7-GNB5 complex that regulates G protein-coupled receptor signaling cascades. The RGS7-GNB5 complex acts as an inhibitor signal transduction by promoting the GTPase activity of G protein alpha subunits, such as GNAO1, thereby driving them into their inactive GDP-bound form. May play a role in synaptic vesicle exocytosis. Glycine-dependent regulation of the RGS7-GNB5 complex by GPR158 affects mood and cognition via its ability to regulate neuronal excitability in L2/L3 pyramidal neurons of the prefrontal cortex. Modulates the activity of potassium channels that are activated by GNAO1 in response to muscarinic acetylcholine receptor M2/CHRM2 signaling. The sequence is that of Regulator of G-protein signaling 7 (RGS7) from Homo sapiens (Human).